A 296-amino-acid chain; its full sequence is 4-diphosphocytidyl-2-C-methyl-D-erythritol kinase (296 aa).

Residue lysine 13 is part of the active site. ATP is bound at residue 98–108 (PVAAGIGGGSA). Aspartate 140 is an active-site residue.

Belongs to the GHMP kinase family. IspE subfamily.

The enzyme catalyses 4-CDP-2-C-methyl-D-erythritol + ATP = 4-CDP-2-C-methyl-D-erythritol 2-phosphate + ADP + H(+). The protein operates within isoprenoid biosynthesis; isopentenyl diphosphate biosynthesis via DXP pathway; isopentenyl diphosphate from 1-deoxy-D-xylulose 5-phosphate: step 3/6. Functionally, catalyzes the phosphorylation of the position 2 hydroxy group of 4-diphosphocytidyl-2C-methyl-D-erythritol. The polypeptide is 4-diphosphocytidyl-2-C-methyl-D-erythritol kinase (Rhodopseudomonas palustris (strain HaA2)).